A 311-amino-acid chain; its full sequence is MPISKTLPYNAIEQIKSYLLQLQNTICVSLESIDGKTRFHEDSWQRAAGGGGKTRIMANGNVFEKAGVNFSHVSGEQLPASASAHREELAGRHFSALGVSLVIHPQNPYVPTTHANVRFFVAEKEDSEPVWWFGGGFDLTPYYGFVEDCEHWHQTALNACLPFGETIYPKFKRWCDDYFFIKHRNEARGIGGLFFDDYNEISFDHSFELMRSIGDHFILAYEPIVARRKDIPFGNREKAFQNYRRGRYAEFNLVYDRGTLFGLQSGGRTESILMSLPPIVHWEYNWHPEKGSDEEKLYTDFLPAKDWLKKE.

A substrate-binding site is contributed by S100. 2 residues coordinate a divalent metal cation: H104 and H114. H114 (proton donor) is an active-site residue. Residue 116–118 coordinates substrate; sequence NVR. Residues H153 and H183 each coordinate a divalent metal cation. The tract at residues 248-283 is important for dimerization; the sequence is YAEFNLVYDRGTLFGLQSGGRTESILMSLPPIVHWE. 266-268 is a binding site for substrate; sequence GGR.

It belongs to the aerobic coproporphyrinogen-III oxidase family. Homodimer. A divalent metal cation serves as cofactor.

The protein localises to the cytoplasm. The enzyme catalyses coproporphyrinogen III + O2 + 2 H(+) = protoporphyrinogen IX + 2 CO2 + 2 H2O. Its pathway is porphyrin-containing compound metabolism; protoporphyrin-IX biosynthesis; protoporphyrinogen-IX from coproporphyrinogen-III (O2 route): step 1/1. In terms of biological role, involved in the heme biosynthesis. Catalyzes the aerobic oxidative decarboxylation of propionate groups of rings A and B of coproporphyrinogen-III to yield the vinyl groups in protoporphyrinogen-IX. The sequence is that of Oxygen-dependent coproporphyrinogen-III oxidase from Legionella pneumophila (strain Corby).